The primary structure comprises 121 residues: Small ribosomal subunit protein uS13 (121 aa).

The segment at 92 to 121 (KRGLPVRGQRTRTNARTRKGPRRAAASLKK) is disordered.

Belongs to the universal ribosomal protein uS13 family. As to quaternary structure, part of the 30S ribosomal subunit. Forms a loose heterodimer with protein S19. Forms two bridges to the 50S subunit in the 70S ribosome.

Located at the top of the head of the 30S subunit, it contacts several helices of the 16S rRNA. In the 70S ribosome it contacts the 23S rRNA (bridge B1a) and protein L5 of the 50S subunit (bridge B1b), connecting the 2 subunits; these bridges are implicated in subunit movement. Contacts the tRNAs in the A and P-sites. This Bordetella bronchiseptica (strain ATCC BAA-588 / NCTC 13252 / RB50) (Alcaligenes bronchisepticus) protein is Small ribosomal subunit protein uS13.